Reading from the N-terminus, the 346-residue chain is tRNA N6-adenosine threonylcarbamoyltransferase (346 aa).

Fe cation contacts are provided by His-111 and His-115. Substrate is bound by residues 134–138, Asp-167, Gly-180, Asp-184, and Asn-279; that span reads LVSGG. Position 307 (Asp-307) interacts with Fe cation.

This sequence belongs to the KAE1 / TsaD family. Fe(2+) is required as a cofactor.

The protein resides in the cytoplasm. It catalyses the reaction L-threonylcarbamoyladenylate + adenosine(37) in tRNA = N(6)-L-threonylcarbamoyladenosine(37) in tRNA + AMP + H(+). Functionally, required for the formation of a threonylcarbamoyl group on adenosine at position 37 (t(6)A37) in tRNAs that read codons beginning with adenine. Is involved in the transfer of the threonylcarbamoyl moiety of threonylcarbamoyl-AMP (TC-AMP) to the N6 group of A37, together with TsaE and TsaB. TsaD likely plays a direct catalytic role in this reaction. In Gloeothece citriformis (strain PCC 7424) (Cyanothece sp. (strain PCC 7424)), this protein is tRNA N6-adenosine threonylcarbamoyltransferase.